The following is a 59-amino-acid chain: MNTQRAQEIVESPDMVDVTYNGRPIYIQRVDEQNETARIFPLGQPENEQEVPLANLKEH.

Belongs to the SspH family.

It is found in the spore core. In Bacillus licheniformis (strain ATCC 14580 / DSM 13 / JCM 2505 / CCUG 7422 / NBRC 12200 / NCIMB 9375 / NCTC 10341 / NRRL NRS-1264 / Gibson 46), this protein is Small, acid-soluble spore protein H.